The primary structure comprises 363 residues: DNA repair protein rlp1 (363 aa).

Belongs to the RecA family. RAD51 subfamily. Interacts with rdl1 and sws1.

Its subcellular location is the cytoplasm. It localises to the nucleus. Required for normal levels of meiotic recombination. Acts in the recombinational pathway of double-strand break (DSB) repair together with rhp51, rhp55 and rad22. Required for the full extent of DNA recombination and cell survival under condition of a replication fork collapse. The sequence is that of DNA repair protein rlp1 from Schizosaccharomyces pombe (strain 972 / ATCC 24843) (Fission yeast).